Reading from the N-terminus, the 913-residue chain is Glutamate receptor ionotropic, kainate 2 (913 aa).

The Extracellular segment spans residues Met1–Pro566. Residues Asn72, Asn78, Asn280, Asn383, Asn417, Asn428, and Asn435 are each glycosylated (N-linked (GlcNAc...) asparagine). Cys101 and Cys352 are oxidised to a cystine. Positions 521, 523, and 528 each coordinate L-glutamate. N-linked (GlcNAc...) asparagine glycosylation occurs at Asn551. A helical membrane pass occupies residues Asp567–Ala587. Residues Arg588–Gly643 lie on the Cytoplasmic side of the membrane. A helical transmembrane segment spans residues Ile644–Leu664. At Thr665 to Asn824 the chain is on the extracellular side. Residues Ala694, Thr695, and Glu743 each coordinate L-glutamate. Residues Cys755 and Cys809 are joined by a disulfide bond. Asn756 carries N-linked (GlcNAc...) asparagine glycosylation. The chain crosses the membrane as a helical span at residues Ile825–Gly845. Over Glu846–Ala913 the chain is Cytoplasmic.

The protein belongs to the glutamate-gated ion channel (TC 1.A.10.1) family. GRIK2 subfamily. In terms of assembly, homotetramer and heterotetramer with GRIK5. Tetramers may be formed by the dimerization of dimers.

The protein localises to the cell membrane. Its subcellular location is the postsynaptic cell membrane. It carries out the reaction Ca(2+)(in) = Ca(2+)(out). The catalysed reaction is Na(+)(in) = Na(+)(out). Its activity is regulated as follows. Cold receptor activity activated by temperatures between 10-19 degrees Celsius. In terms of biological role, ionotropic glutamate receptor that functions as a cation-permeable ligand-gated ion channel, gated by L-glutamate and the glutamatergic agonist kainic acid. L-glutamate acts as an excitatory neurotransmitter at many synapses in the central nervous system. Binding of the excitatory neurotransmitter L-glutamate induces a conformation change, leading to the opening of the cation channel, and thereby converts the chemical signal to an electrical impulse. The receptor then desensitizes rapidly and enters a transient inactive state, characterized by the presence of bound agonist. Independent of its ionotropic glutamate receptor activity, acts as a thermoreceptor conferring sensitivity to cold temperatures. Functions in dorsal root ganglion neurons. In Xenopus laevis (African clawed frog), this protein is Glutamate receptor ionotropic, kainate 2 (grik2).